The following is a 215-amino-acid chain: Nascent polypeptide-associated complex subunit alpha (215 aa).

A disordered region spans residues 1–81; it reads MPGEATETVP…SEKKARKAMS (81 aa). A compositionally biased stretch (polar residues) spans 9-28; it reads VPATEQELPQPQAETGSGTE. Residues 29-42 are compositionally biased toward acidic residues; that stretch reads SDSDESVPELEEQD. A Phosphoserine; by ILK1 modification is found at Ser-43. The span at 44–57 shows a compositional bias: low complexity; that stretch reads TQTATQQAQLAAAA. Residues 69 to 80 are required for DNA-binding; that stretch reads QSRSEKKARKAM. The 66-residue stretch at 70 to 135 folds into the NAC-A/B domain; sequence SRSEKKARKA…AKIEDLSQQA (66 aa). The interval 93–108 is RNA/DNA-binding; that stretch reads RVTIRKSKNILFVITK. Residue Ser-132 is modified to Phosphoserine. Lys-142 carries the post-translational modification N6-acetyllysine; alternate. Lys-142 is covalently cross-linked (Glycyl lysine isopeptide (Lys-Gly) (interchain with G-Cter in SUMO2); alternate). Thr-159 bears the Phosphothreonine; by GSK3-beta mark. The residue at position 161 (Thr-161) is a Phosphothreonine. 4 positions are modified to phosphoserine: Ser-166, Ser-186, Ser-191, and Ser-203. Residues 176–213 enclose the UBA domain; sequence VEVKDIELVMSQANVSRAKAVRALKNNSNDIVNAIMEL.

The protein belongs to the NAC-alpha family. As to quaternary structure, part of the nascent polypeptide-associated complex (NAC), which is a heterodimer of NACA and BTF3 (via NAC-A/B domains). NAC associates with ribosomes through the BTF3/NACB subunit and contacts the ribosomal protein L23, which is positioned near the exiting site. Both subunits can contact nascent polypeptide chains. NACA may also form homodimers, and only this form binds DNA. Interacts with TBP and JUN. Phosphorylation of Ser-43 by ILK during cell adhesion may promote nuclear localization. Phosphorylation of Thr-159 by GSK3B may promote proteasome mediated degradation. As to expression, isoform 1 appears to be ubiquitously expressed.

The protein localises to the cytoplasm. The protein resides in the nucleus. In terms of biological role, prevents inappropriate targeting of non-secretory polypeptides to the endoplasmic reticulum (ER). Binds to nascent polypeptide chains as they emerge from the ribosome and blocks their interaction with the signal recognition particle (SRP), which normally targets nascent secretory peptides to the ER. Also reduces the inherent affinity of ribosomes for protein translocation sites in the ER membrane (M sites). Isoform 1 and isoform 2 appear to bind DNA and play roles in transcription. Isoform 1 may function as a specific coactivator for JUN, acting to stabilize the interaction of JUN homodimers with promoter elements. The polypeptide is Nascent polypeptide-associated complex subunit alpha (Naca) (Mus musculus (Mouse)).